A 362-amino-acid polypeptide reads, in one-letter code: Glutamate 5-kinase (362 aa).

K3 is a binding site for ATP. Substrate is bound by residues S43, D128, and N140. ATP is bound by residues 160–161 (TD) and 202–208 (TGGMRTK). The region spanning 267 to 348 (PGTILIDAGA…REIEPILGYS (82 aa)) is the PUA domain.

This sequence belongs to the glutamate 5-kinase family.

It localises to the cytoplasm. The enzyme catalyses L-glutamate + ATP = L-glutamyl 5-phosphate + ADP. The protein operates within amino-acid biosynthesis; L-proline biosynthesis; L-glutamate 5-semialdehyde from L-glutamate: step 1/2. In terms of biological role, catalyzes the transfer of a phosphate group to glutamate to form L-glutamate 5-phosphate. The polypeptide is Glutamate 5-kinase (Xanthomonas campestris pv. campestris (strain 8004)).